The sequence spans 486 residues: Alpha-L-arabinofuranosidase B (486 aa).

Positions M1–A25 are cleaved as a signal peptide. N-linked (GlcNAc...) asparagine glycosylation is present at N42. The tract at residues L45 to P342 is catalytic. D51 serves as the catalytic Proton acceptor. E229 functions as the Proton donor in the catalytic mechanism. N-linked (GlcNAc...) asparagine glycosylation is found at N302, N416, and N426. An ABD region spans residues S359–N467.

The protein belongs to the glycosyl hydrolase 43 family.

Its subcellular location is the secreted. The enzyme catalyses Hydrolysis of terminal non-reducing alpha-L-arabinofuranoside residues in alpha-L-arabinosides.. Its pathway is glycan metabolism; L-arabinan degradation. Secreted arabinofuranosidase that causes degradation of rice cell wall components during infection. Required for virulence. The sequence is that of Alpha-L-arabinofuranosidase B from Pyricularia oryzae (strain 70-15 / ATCC MYA-4617 / FGSC 8958) (Rice blast fungus).